The primary structure comprises 336 residues: D-alanine--D-alanine ligase (336 aa).

Residues 124-330 (KMWFSALGIP…FTEYLSLVIK (207 aa)) enclose the ATP-grasp domain. 154 to 209 (ALENWGSIFVKAASQGSSVGCYKVDDSSKVAGVLKDAFGYAPYVIVEKTIKARELE) lines the ATP pocket. Mg(2+) is bound by residues Asp284, Glu297, and Asn299.

Belongs to the D-alanine--D-alanine ligase family. It depends on Mg(2+) as a cofactor. Mn(2+) is required as a cofactor.

The protein resides in the cytoplasm. The catalysed reaction is 2 D-alanine + ATP = D-alanyl-D-alanine + ADP + phosphate + H(+). Its pathway is cell wall biogenesis; peptidoglycan biosynthesis. Its function is as follows. Cell wall formation. The sequence is that of D-alanine--D-alanine ligase from Shewanella sp. (strain MR-7).